The primary structure comprises 286 residues: 5-amino-6-(5-phospho-D-ribitylamino)uracil phosphatase YwtE (286 aa).

Catalysis depends on aspartate 7, which acts as the Nucleophile. Aspartate 7 lines the Mg(2+) pocket. Position 8 (leucine 8) interacts with phosphate. Aspartate 9 provides a ligand contact to Mg(2+). Residues 41 to 42 (TG) and lysine 210 contribute to the phosphate site. Residues aspartate 233 and serine 234 each contribute to the Mg(2+) site. Asparagine 236 is a phosphate binding site.

This sequence belongs to the HAD-like hydrolase superfamily. Cof family. Mg(2+) is required as a cofactor.

It catalyses the reaction 5-amino-6-(5-phospho-D-ribitylamino)uracil + H2O = 5-amino-6-(D-ribitylamino)uracil + phosphate. It participates in cofactor biosynthesis; riboflavin biosynthesis; 5-amino-6-(D-ribitylamino)uracil from GTP: step 4/4. Catalyzes the dephosphorylation of the riboflavin precursor 5-amino-6-(5-phospho-D-ribitylamino)uracil and of flavin mononucleotide (FMN) in vitro. Also catalyzes the dephosphorylation of phosphorylated 5-6 carbon sugars and monophosphate nucleotides (NMP) in vitro. The sequence is that of 5-amino-6-(5-phospho-D-ribitylamino)uracil phosphatase YwtE (ywtE) from Bacillus subtilis (strain 168).